The sequence spans 37 residues: Large ribosomal subunit protein bL36 (37 aa).

It belongs to the bacterial ribosomal protein bL36 family.

This chain is Large ribosomal subunit protein bL36, found in Halothermothrix orenii (strain H 168 / OCM 544 / DSM 9562).